A 436-amino-acid chain; its full sequence is Enolase (436 aa).

Glutamine 167 is a binding site for (2R)-2-phosphoglycerate. Glutamate 209 acts as the Proton donor in catalysis. Positions 246, 291, and 318 each coordinate Mg(2+). (2R)-2-phosphoglycerate-binding residues include lysine 343, arginine 372, serine 373, and lysine 394. Lysine 343 serves as the catalytic Proton acceptor.

This sequence belongs to the enolase family. In terms of assembly, component of the RNA degradosome, a multiprotein complex involved in RNA processing and mRNA degradation. Requires Mg(2+) as cofactor.

The protein resides in the cytoplasm. It is found in the secreted. Its subcellular location is the cell surface. The enzyme catalyses (2R)-2-phosphoglycerate = phosphoenolpyruvate + H2O. It participates in carbohydrate degradation; glycolysis; pyruvate from D-glyceraldehyde 3-phosphate: step 4/5. Functionally, catalyzes the reversible conversion of 2-phosphoglycerate (2-PG) into phosphoenolpyruvate (PEP). It is essential for the degradation of carbohydrates via glycolysis. In Glaesserella parasuis serovar 5 (strain SH0165) (Haemophilus parasuis), this protein is Enolase.